Reading from the N-terminus, the 185-residue chain is Signal peptidase complex subunit 3 (185 aa).

Topologically, residues 1-12 (MIVDTFTNRGST) are cytoplasmic. Residues 13-34 (FFSKLSTVLFFLCAVITFQGVI) traverse the membrane as a helical; Signal-anchor for type II membrane protein segment. The Lumenal portion of the chain corresponds to 35 to 185 (QRREVELDTP…PFHKIITQPK (151 aa)). Asn148 is a glycosylation site (N-linked (GlcNAc...) asparagine).

The protein belongs to the SPCS3 family. In terms of assembly, component of the signal peptidase complex (SPC) composed of a catalytic subunit sec11 and three accessory subunits spc1, spc2 and spc3. The complex induces a local thinning of the ER membrane which is used to measure the length of the signal peptide (SP) h-region of protein substrates. This ensures the selectivity of the complex towards h-regions shorter than 18-20 amino acids. SPC associates with the translocon complex.

It is found in the endoplasmic reticulum membrane. Essential component of the signal peptidase complex (SPC) which catalyzes the cleavage of N-terminal signal sequences from nascent proteins as they are translocated into the lumen of the endoplasmic reticulum. Essential for the SPC catalytic activity, possibly by stabilizing and positioning the active center of the complex close to the lumenal surface. Essential for viability. The sequence is that of Signal peptidase complex subunit 3 (spc3) from Schizosaccharomyces pombe (strain 972 / ATCC 24843) (Fission yeast).